A 488-amino-acid chain; its full sequence is MSRSKMSSQRLWAVRAQFLLLWLLLWAAPVPWAEARRSRVSLPCPDACDPTRCPPLPSCSAGSALVPDRCGCCQVCAAVEGQECGGARGRPCVPGLRCGAPFSREPSGRAWLGTCGCAEGAEGAAVCGSDGRTYPSLCALRKENRAARQRGALPAVPVQKGACGDSGTTRAGRLRTKYNFIAAVVEKVAPSVVHLQLFRRSPLTNQEIPSSSGSGFIVSEDGLIVTNAHVLTNQQKIQVELQNGAQYEATVKDIDHKLDLALIKIEPDTDLPVLLLGRSSDLRAGEFVVALGSPFSLQNTVTAGIVSTTQRGGKELGLKDSDIDYIQTDAIINHGNSGGPLVNLDGDVIGINTLKVTAGISFAIPSDRIRQFLADYHERQLKGKAPLQKKYLGLRMLPLTLNLLQEMKRQDPDFPDVSSGVFVYEVIQGSAAASSGLRDHDVIVSINGQPVTTTTDVIEAVKDNAFLSIIVLRGSQTLFLTVTPEIIN.

The first 35 residues, 1–35 (MSRSKMSSQRLWAVRAQFLLLWLLLWAAPVPWAEA), serve as a signal peptide directing secretion. The region spanning 40 to 118 (VSLPCPDACD…RAWLGTCGCA (79 aa)) is the IGFBP N-terminal domain. 6 cysteine pairs are disulfide-bonded: cysteine 44–cysteine 70, cysteine 48–cysteine 72, cysteine 53–cysteine 73, cysteine 59–cysteine 76, cysteine 84–cysteine 98, and cysteine 92–cysteine 115. Residues 213-373 (GSGFIVSEDG…IPSDRIRQFL (161 aa)) are serine protease. Catalysis depends on charge relay system residues histidine 229, aspartate 259, and serine 337. In terms of domain architecture, PDZ spans 384–476 (KAPLQKKYLG…LSIIVLRGSQ (93 aa)).

It belongs to the peptidase S1C family.

It localises to the secreted. Its function is as follows. Serine protease. The chain is Serine protease HTR4 (Htra4) from Rattus norvegicus (Rat).